We begin with the raw amino-acid sequence, 342 residues long: MNKRIAIVLFNLGGPEDIEYVKPFLFNLFYDKAIINLPNPLRYIIAKIISITREKKSQKIYSLIGSKSYLIQETEKQKLAITEKLKEFIKEDFIIFINMRYSTPFAKEVIGQIKEYNPSEIILLPLYPQFSSTTTGSSVKNFLQNIDIDIPIKTICCYPIEEDFIKAHVSIIKEKLYDKNFRILFSAHGLPKRIIKAGDPYSFQIKETVNKIVKELNIKDLDYKITYQSRVGPIEWLKPNTEDEIELAGKLKKDIIIVPISFVSEHVETLVELDIEYKLIADKYKIQYTRIPTLGTNKIFINSLTNILLRFINNTNTNLVMSSSSKRICPNKFTKCLCNLTN.

Fe cation contacts are provided by His-188 and Glu-268.

The protein belongs to the ferrochelatase family.

Its subcellular location is the cytoplasm. The catalysed reaction is heme b + 2 H(+) = protoporphyrin IX + Fe(2+). It functions in the pathway porphyrin-containing compound metabolism; protoheme biosynthesis; protoheme from protoporphyrin-IX: step 1/1. Its function is as follows. Catalyzes the ferrous insertion into protoporphyrin IX. The chain is Ferrochelatase from Rickettsia prowazekii (strain Madrid E).